A 760-amino-acid polypeptide reads, in one-letter code: Mitochondrial intermediate peptidase (760 aa).

The N-terminal 19 residues, Met1–Phe19, are a transit peptide targeting the mitochondrion. Residue His543 participates in Zn(2+) binding. Glu544 is an active-site residue. His547 lines the Zn(2+) pocket.

Belongs to the peptidase M3 family. Zn(2+) is required as a cofactor.

It is found in the mitochondrion matrix. The catalysed reaction is Release of an N-terminal octapeptide as second stage of processing of some proteins imported into the mitochondrion.. Functionally, cleaves proteins, imported into the mitochondrion, to their mature size. While most mitochondrial precursor proteins are processed to the mature form in one step by mitochondrial processing peptidase (MPP), the sequential cleavage by MIP of an octapeptide after initial processing by MPP is a required step for a subgroup of nuclear-encoded precursor proteins destined for the matrix or the inner membrane. This chain is Mitochondrial intermediate peptidase (OCT1), found in Leucoagaricus gongylophorus (Leaf-cutting ant fungus).